The primary structure comprises 171 residues: Alpha-amylase/trypsin inhibitor CMd (171 aa).

The first 24 residues, 1-24, serve as a signal peptide directing secretion; that stretch reads MACKSSRSLLLLATVMVSVFAAAA.

This sequence belongs to the protease inhibitor I6 (cereal trypsin/alpha-amylase inhibitor) family. As to quaternary structure, heterotetramer of one CMa, one CMb and two CMd chains. Post-translationally, five disulfide bonds, which are essential for the inhibitor activity, are probably present. As to expression, endosperm.

It localises to the secreted. Functionally, part of a complex with inhibitory activity, but CMd is inactive as a separate subunit. The polypeptide is Alpha-amylase/trypsin inhibitor CMd (IAT3) (Hordeum vulgare (Barley)).